A 298-amino-acid chain; its full sequence is Ribosomal RNA small subunit methyltransferase A (298 aa).

S-adenosyl-L-methionine-binding residues include asparagine 35, leucine 37, glycine 62, glutamate 83, aspartate 108, and asparagine 133.

Belongs to the class I-like SAM-binding methyltransferase superfamily. rRNA adenine N(6)-methyltransferase family. RsmA subfamily.

Its subcellular location is the cytoplasm. It catalyses the reaction adenosine(1518)/adenosine(1519) in 16S rRNA + 4 S-adenosyl-L-methionine = N(6)-dimethyladenosine(1518)/N(6)-dimethyladenosine(1519) in 16S rRNA + 4 S-adenosyl-L-homocysteine + 4 H(+). Its function is as follows. Specifically dimethylates two adjacent adenosines (A1518 and A1519) in the loop of a conserved hairpin near the 3'-end of 16S rRNA in the 30S particle. May play a critical role in biogenesis of 30S subunits. This is Ribosomal RNA small subunit methyltransferase A from Streptococcus pyogenes serotype M4 (strain MGAS10750).